Here is a 126-residue protein sequence, read N- to C-terminus: Fluoride-specific ion channel FluC 2 (126 aa).

4 helical membrane passes run Ile-11–Leu-31, Gly-34–Tyr-54, Gly-66–Val-86, and Phe-93–Phe-113. The Na(+) site is built by Gly-76 and Thr-79.

Belongs to the fluoride channel Fluc/FEX (TC 1.A.43) family.

The protein localises to the cell membrane. The catalysed reaction is fluoride(in) = fluoride(out). Its activity is regulated as follows. Na(+) is not transported, but it plays an essential structural role and its presence is essential for fluoride channel function. Its function is as follows. Fluoride-specific ion channel. Important for reducing fluoride concentration in the cell, thus reducing its toxicity. The sequence is that of Fluoride-specific ion channel FluC 2 from Methanosarcina acetivorans (strain ATCC 35395 / DSM 2834 / JCM 12185 / C2A).